The primary structure comprises 632 residues: Probable membrane transporter protein MamO (632 aa).

Residues 25–45 (APVSILAFLILVTFAWGAYLL) form a helical membrane-spanning segment. The protease-like stretch occupies residues 78–268 (LYYTVPPAVV…VIVSHLQDVV (191 aa)). Residues histidine 148 and histidine 263 each coordinate a divalent metal cation. The next 7 helical transmembrane spans lie at 340–360 (IGGYSIADILGLGMLALAAGV), 412–432 (LVQWDKVKPLIPWGVAGVVIG), 434–454 (FIGNAIGDSVVGVLLGLFALI), 513–533 (AVLGLPMGLFSGILGISGGVI), 550–570 (IANSSVLVFWASVAGSVVAFI), 582–602 (APVTLALVMIPGAYVGGILGA), and 612–632 (VLKGIYAATMAAIAIKMLTTV). Residues 365 to 632 (MTMGGGVLQV…AIAIKMLTTV (268 aa)) are TSUP-like.

This sequence in the N-terminal section; belongs to the peptidase S1C family. It in the C-terminal section; belongs to the 4-toluene sulfonate uptake permease (TSUP) (TC 2.A.102) family. It depends on a metal cation as a cofactor. Post-translationally, subject to proteolytic cleavage by MamE.

It localises to the magnetosome membrane. Functionally, plays 2 roles; promotes magnetite nucleation/formation and activates the MamE protease. Despite its near conservation of a protease-like sequence, this is probably not a protease. Required in conjunction with MamP for proteolysis of at least MamE, itself and MamP. May transport a solute that controls MamE's protease activity. May place individual iron atoms into the magnetite lattice. One of 7 genes (mamLQBIEMO) able to induce magnetosome membrane biogenesis; coexpression of mamLQRBIEMO in a deletion of the 17 gene mamAB operon restores magnetosome vesicle formation but not magnetite biosynthesis. The protein is Probable membrane transporter protein MamO of Magnetospirillum gryphiswaldense (strain DSM 6361 / JCM 21280 / NBRC 15271 / MSR-1).